A 1040-amino-acid polypeptide reads, in one-letter code: Eukaryotic translation initiation factor 3 subunit A (1040 aa).

Residues 92–121 adopt a coiled-coil conformation; sequence LKKFIELAEKKVTEAQTKADEIQSSLESAA. The PCI domain maps to 339-523; that stretch reads MTKAASFVLL…GVLTFDSDVF (185 aa). A coiled-coil region spans residues 608 to 906; the sequence is RVIIEKKKEA…AEARRAARKA (299 aa). Basic and acidic residues-rich tracts occupy residues 617–632 and 795–901; these read AATD…EETR and EVSE…EARR. Disordered regions lie at residues 617-641 and 795-1040; these read AATD…QQLQ and EVSE…QQNQ. 4 stretches are compositionally biased toward low complexity: residues 908–917, 945–955, 978–993, and 1004–1018; these read LEPAAPAARP, KEAAGGAAPEA, SGSS…NGAP, and SSSS…TPGS.

The protein belongs to the eIF-3 subunit A family. Component of the eukaryotic translation initiation factor 3 (eIF-3) complex.

Its subcellular location is the cytoplasm. Functionally, RNA-binding component of the eukaryotic translation initiation factor 3 (eIF-3) complex, which is involved in protein synthesis of a specialized repertoire of mRNAs and, together with other initiation factors, stimulates binding of mRNA and methionyl-tRNAi to the 40S ribosome. The eIF-3 complex specifically targets and initiates translation of a subset of mRNAs involved in cell proliferation. The protein is Eukaryotic translation initiation factor 3 subunit A (tif32) of Aspergillus terreus (strain NIH 2624 / FGSC A1156).